The chain runs to 1235 residues: Chitin synthase 4 (1235 aa).

Over residues Met1 to Pro11 the composition is skewed to pro residues. The disordered stretch occupies residues Met1–Gly203. Residues Met1–Asn212 lie on the Cytoplasmic side of the membrane. Residues Tyr19–Arg28 show a composition bias toward basic residues. Residues Pro46–Pro59 show a composition bias toward polar residues. Over residues Ile94 to Asn107 the composition is skewed to basic and acidic residues. The span at Asn116–Gly125 shows a compositional bias: polar residues. Basic and acidic residues predominate over residues Glu169–Lys187. The segment covering His188–Arg199 has biased composition (basic residues). A helical membrane pass occupies residues Ile213–Pro233. Residues Glu234–Lys244 are Extracellular-facing. The chain crosses the membrane as a helical span at residues Met245–Phe265. At Thr266–Leu514 the chain is on the cytoplasmic side. The helical transmembrane segment at Val515 to Ile535 threads the bilayer. Residues Ser536–Leu1065 lie on the Extracellular side of the membrane. A disordered region spans residues Ser545–Ala592. Over residues Asp549–Glu558 the composition is skewed to basic and acidic residues. An N-linked (GlcNAc...) asparagine glycan is attached at Asn639. Residues Phe645–Ala670 form a disordered region. Low complexity predominate over residues Ser648 to Gly665. Asn1034 carries N-linked (GlcNAc...) asparagine glycosylation. A helical transmembrane segment spans residues Ile1066 to Ile1086. At Ile1087–Gln1092 the chain is on the cytoplasmic side. Residues Ile1093–Thr1113 form a helical membrane-spanning segment. At Ala1114–Ser1116 the chain is on the extracellular side. A helical membrane pass occupies residues Trp1117–Leu1137. At Pro1138 to Ala1235 the chain is on the cytoplasmic side. Positions Arg1201 to Ala1235 are disordered. Positions Arg1220–Ala1235 are enriched in basic and acidic residues.

The protein belongs to the chitin synthase family. Class IV subfamily.

The protein resides in the cell membrane. The enzyme catalyses [(1-&gt;4)-N-acetyl-beta-D-glucosaminyl](n) + UDP-N-acetyl-alpha-D-glucosamine = [(1-&gt;4)-N-acetyl-beta-D-glucosaminyl](n+1) + UDP + H(+). Functionally, polymerizes chitin, a structural polymer of the cell wall and septum, by transferring the sugar moiety of UDP-GlcNAc to the non-reducing end of the growing chitin polymer. The chain is Chitin synthase 4 (chs-4) from Neurospora crassa (strain ATCC 24698 / 74-OR23-1A / CBS 708.71 / DSM 1257 / FGSC 987).